Here is a 358-residue protein sequence, read N- to C-terminus: Protein RecA (358 aa).

Residue 67–74 (GPESSGKT) coordinates ATP.

It belongs to the RecA family.

It is found in the cytoplasm. Can catalyze the hydrolysis of ATP in the presence of single-stranded DNA, the ATP-dependent uptake of single-stranded DNA by duplex DNA, and the ATP-dependent hybridization of homologous single-stranded DNAs. It interacts with LexA causing its activation and leading to its autocatalytic cleavage. This is Protein RecA from Xenorhabdus bovienii (Xenorhabdus nematophila subsp. bovienii).